A 438-amino-acid polypeptide reads, in one-letter code: GTPase Der (438 aa).

EngA-type G domains lie at 4 to 168 (PIVA…KNEG) and 177 to 352 (IKIA…DNYC). Residues 10–17 (GRPNVGKS), 57–61 (DTGGI), 120–123 (NKID), 183–190 (GKPNVGKS), 230–234 (DTAGV), and 295–298 (NKWD) each bind GTP. The KH-like domain maps to 353–437 (KQIKTGILND…GIKLEFRERK (85 aa)).

Belongs to the TRAFAC class TrmE-Era-EngA-EngB-Septin-like GTPase superfamily. EngA (Der) GTPase family. In terms of assembly, associates with the 50S ribosomal subunit.

Its function is as follows. GTPase that plays an essential role in the late steps of ribosome biogenesis. The polypeptide is GTPase Der (Clostridium kluyveri (strain NBRC 12016)).